Here is a 775-residue protein sequence, read N- to C-terminus: Ribonucleoside-diphosphate reductase large subunit (775 aa).

Substrate is bound by residues T200, 215–216, G246, 427–431, and 606–610; these read SC, NLCTE, and PTVSS. An intrachain disulfide couples C216 to C444. N427 serves as the catalytic Proton acceptor. C429 serves as the catalytic Cysteine radical intermediate. E431 serves as the catalytic Proton acceptor.

Belongs to the ribonucleoside diphosphate reductase large chain family. As to quaternary structure, heterotetramer composed of a homodimer of the large subunit (R1) and a homodimer of the small subunit (R2). Larger multisubunit protein complex are also active, composed of (R1)n(R2)n.

It carries out the reaction a 2'-deoxyribonucleoside 5'-diphosphate + [thioredoxin]-disulfide + H2O = a ribonucleoside 5'-diphosphate + [thioredoxin]-dithiol. Ribonucleoside-diphosphate reductase holoenzyme provides the precursors necessary for viral DNA synthesis. Allows virus growth in non-dividing cells, as well as reactivation from latency in infected hosts. Catalyzes the biosynthesis of deoxyribonucleotides from the corresponding ribonucleotides. The protein is Ribonucleoside-diphosphate reductase large subunit of Homo sapiens (Human).